The chain runs to 94 residues: DNA-directed RNA polymerase subunit omega (94 aa).

This sequence belongs to the RNA polymerase subunit omega family. In terms of assembly, the RNAP catalytic core consists of 2 alpha, 1 beta, 1 beta' and 1 omega subunit. When a sigma factor is associated with the core the holoenzyme is formed, which can initiate transcription.

It carries out the reaction RNA(n) + a ribonucleoside 5'-triphosphate = RNA(n+1) + diphosphate. In terms of biological role, promotes RNA polymerase assembly. Latches the N- and C-terminal regions of the beta' subunit thereby facilitating its interaction with the beta and alpha subunits. The chain is DNA-directed RNA polymerase subunit omega from Frankia alni (strain DSM 45986 / CECT 9034 / ACN14a).